The sequence spans 502 residues: Lysine--tRNA ligase (502 aa).

The disordered stretch occupies residues 1–22 (MSDHEQAQAQSQDENQIMAERR). Residues Glu413 and Glu420 each coordinate Mg(2+).

The protein belongs to the class-II aminoacyl-tRNA synthetase family. In terms of assembly, homodimer. The cofactor is Mg(2+).

Its subcellular location is the cytoplasm. It catalyses the reaction tRNA(Lys) + L-lysine + ATP = L-lysyl-tRNA(Lys) + AMP + diphosphate. This Chromobacterium violaceum (strain ATCC 12472 / DSM 30191 / JCM 1249 / CCUG 213 / NBRC 12614 / NCIMB 9131 / NCTC 9757 / MK) protein is Lysine--tRNA ligase.